The chain runs to 59 residues: Single-pass membrane and coiled-coil domain-containing protein 4 homolog (59 aa).

The span at 1 to 11 (MAGRNKAKPRL) shows a compositional bias: basic residues. A disordered region spans residues 1–20 (MAGRNKAKPRLSKKEKEERR). The stretch at 10-30 (RLSKKEKEERRKDMAEVQEKV) forms a coiled coil. Residues 30 to 50 (VFSVVVPVVVAFTVVIMLIVY) traverse the membrane as a helical segment.

Belongs to the SMCO4 family.

It is found in the membrane. This Argas monolakensis (Mono lake bird tick) protein is Single-pass membrane and coiled-coil domain-containing protein 4 homolog.